A 289-amino-acid polypeptide reads, in one-letter code: 3-methyl-2-oxobutanoate hydroxymethyltransferase (289 aa).

Mg(2+) is bound by residues Asp-58 and Asp-99. Residues 58–59, Asp-99, and Lys-128 each bind 3-methyl-2-oxobutanoate; that span reads DS. Glu-130 contacts Mg(2+). Glu-197 serves as the catalytic Proton acceptor.

The protein belongs to the PanB family. Homodecamer; pentamer of dimers. The cofactor is Mg(2+).

The protein localises to the cytoplasm. The catalysed reaction is 3-methyl-2-oxobutanoate + (6R)-5,10-methylene-5,6,7,8-tetrahydrofolate + H2O = 2-dehydropantoate + (6S)-5,6,7,8-tetrahydrofolate. It functions in the pathway cofactor biosynthesis; (R)-pantothenate biosynthesis; (R)-pantoate from 3-methyl-2-oxobutanoate: step 1/2. In terms of biological role, catalyzes the reversible reaction in which hydroxymethyl group from 5,10-methylenetetrahydrofolate is transferred onto alpha-ketoisovalerate to form ketopantoate. The polypeptide is 3-methyl-2-oxobutanoate hydroxymethyltransferase (Leptothrix cholodnii (strain ATCC 51168 / LMG 8142 / SP-6) (Leptothrix discophora (strain SP-6))).